The primary structure comprises 231 residues: CLAVATA3/ESR (CLE)-related protein 4B-1 (231 aa).

The N-terminal stretch at 1-21 is a signal peptide; sequence MATNTMLCLLILSVVLALAFA. The required for secretion from the host cytoplasm to the host apoplasm stretch occupies residues 21–83; the sequence is ATNKKGDEEP…SNLLPNNNWM (63 aa). An N-linked (GlcNAc...) asparagine glycan is attached at Asn-32. The interval 116–231 is disordered; sequence RKTGMHSQRH…APAGPDPIHH (116 aa). 2 stretches are compositionally biased toward basic and acidic residues: residues 125-137 and 144-221; these read HHEETTLEQEKRV and PIHH…EKRG. An A-1 repeat occupies 127-135; the sequence is EETTLEQEK. The segment at 127 to 219 is 5 X approximate repeat A; the sequence is EETTLEQEKR…HEETTFEQEK (93 aa). The stretch at 136 to 147 is one CLE-1 repeat; that stretch reads RVAGAGPDPIHH. The segment at 136–231 is 5 X approximate repeat CLE; the sequence is RVAGAGPDPI…APAGPDPIHH (96 aa). The stretch at 148-156 is one A-2 repeat; the sequence is QDTTLEQEK. Residues 157–168 form a CLE-2 repeat; it reads RAVPAGPDPKHH. The A-3 repeat unit spans residues 169–177; it reads EETTLEQEK. The CLE-3 repeat unit spans residues 178–189; the sequence is RAVPAGPDPKHH. The A-4 repeat unit spans residues 190–198; the sequence is EETTLEQEK. The stretch at 199–210 is one CLE-4 repeat; it reads RAVPAGPDPKHH. The stretch at 211-219 is one A-5 repeat; it reads EETTFEQEK. The stretch at 220 to 231 is one CLE-5 repeat; it reads RGAPAGPDPIHH.

This sequence belongs to the CLV3/ESR signal peptide family. In terms of tissue distribution, highly expressed exclusively within the dorsal esophageal gland cell during syncytium formation in host plants.

Its subcellular location is the secreted. The protein resides in the host cytoplasm. The protein localises to the host extracellular space. It is found in the extracellular space. It localises to the apoplast. Functionally, mimics host plant CLE extracellular signal peptides that regulate cell fate. May play a role in the differentiation or division of feeding cells (syncytia) induced in plant roots during infection. This Globodera rostochiensis (Golden nematode worm) protein is CLAVATA3/ESR (CLE)-related protein 4B-1 (CLE-4B-1).